A 243-amino-acid polypeptide reads, in one-letter code: Probable 2-phosphosulfolactate phosphatase (243 aa).

It belongs to the ComB family. Mg(2+) serves as cofactor.

It carries out the reaction (2R)-O-phospho-3-sulfolactate + H2O = (2R)-3-sulfolactate + phosphate. This is Probable 2-phosphosulfolactate phosphatase from Synechococcus sp. (strain CC9605).